Consider the following 644-residue polypeptide: DNA gyrase subunit B (644 aa).

One can recognise a Toprim domain in the interval 429 to 543; that stretch reads CEIFLVEGDS…AGYVYIAQPP (115 aa). Mg(2+) is bound by residues Glu-435, Asp-508, and Asp-510.

Belongs to the type II topoisomerase GyrB family. In terms of assembly, heterotetramer, composed of two GyrA and two GyrB chains. In the heterotetramer, GyrA contains the active site tyrosine that forms a transient covalent intermediate with DNA, while GyrB binds cofactors and catalyzes ATP hydrolysis. It depends on Mg(2+) as a cofactor. Mn(2+) is required as a cofactor. Ca(2+) serves as cofactor.

The protein resides in the cytoplasm. It carries out the reaction ATP-dependent breakage, passage and rejoining of double-stranded DNA.. Functionally, a type II topoisomerase that negatively supercoils closed circular double-stranded (ds) DNA in an ATP-dependent manner to modulate DNA topology and maintain chromosomes in an underwound state. Negative supercoiling favors strand separation, and DNA replication, transcription, recombination and repair, all of which involve strand separation. Also able to catalyze the interconversion of other topological isomers of dsDNA rings, including catenanes and knotted rings. Type II topoisomerases break and join 2 DNA strands simultaneously in an ATP-dependent manner. The chain is DNA gyrase subunit B from Staphylococcus aureus (strain MRSA252).